Reading from the N-terminus, the 368-residue chain is DNA-directed RNA polymerase II subunit GRINL1A (368 aa).

The segment at 29 to 68 (KRQERLLRNEKFICKLPDKGKKIFDSFAKLKAAIAECEEV) is important for transcription repressor activity. 3 stretches are compositionally biased toward polar residues: residues 116 to 131 (SSVD…QNQG), 205 to 224 (GEQQ…LSSG), and 258 to 273 (QNDS…SPIS). Disordered regions lie at residues 116–186 (SSVD…DTSS), 203–227 (DQGE…GTEK), and 255–282 (PFRQ…RRDK). Positions 227 to 298 (KKPHYMEVLE…TAARLLPLHH (72 aa)) are interaction with Pol II. Ser-270 is modified (phosphoserine). The tract at residues 299-314 (MPTQLLSIEESLALQK) is important for transcription repressor activity. A coiled-coil region spans residues 301-335 (TQLLSIEESLALQKQQKQNYEEMQAKLAAQKLAER). An interaction with Pol II region spans residues 315 to 340 (QQKQNYEEMQAKLAAQKLAERLNIKM). The segment at 339–368 (KMRSYNPEGESSGRYREVRDEDDDWSSDEF) is disordered. A compositionally biased stretch (acidic residues) spans 358 to 368 (DEDDDWSSDEF).

It belongs to the GRINL1 family. In terms of assembly, component of the Pol II(G) complex, which contains the RNA polymerase II (Pol II) core complex subunits and POLR2M isoform 1. Pol II(G) appears to be an abundant form of Pol II. Dephosphorylated at Ser-270 by the PNUTS-PP1 complex, promoting RNA polymerase II transcription pause-release. Detected in adult an fetal brain. Detected in heart, kidney, skeletal muscle, small intestine, lung, prostate and testis.

The protein resides in the nucleus. Its function is as follows. Appears to be a stable component of the Pol II(G) complex form of RNA polymerase II (Pol II). Pol II synthesizes mRNA precursors and many functional non-coding RNAs and is the central component of the basal RNA polymerase II transcription machinery. May play a role in the Mediator complex-dependent regulation of transcription activation. Acts as a negative regulator of transcriptional activation; this repression is relieved by the Mediator complex, which restores Pol II(G) activator-dependent transcription to a level equivalent to that of Pol II. This chain is DNA-directed RNA polymerase II subunit GRINL1A (POLR2M), found in Homo sapiens (Human).